Here is a 527-residue protein sequence, read N- to C-terminus: Peptide chain release factor 3 (527 aa).

Residues A9–L277 enclose the tr-type G domain. Residues S18–T25, D86–H90, and N140–D143 each bind GTP.

The protein belongs to the TRAFAC class translation factor GTPase superfamily. Classic translation factor GTPase family. PrfC subfamily.

The protein localises to the cytoplasm. Functionally, increases the formation of ribosomal termination complexes and stimulates activities of RF-1 and RF-2. It binds guanine nucleotides and has strong preference for UGA stop codons. It may interact directly with the ribosome. The stimulation of RF-1 and RF-2 is significantly reduced by GTP and GDP, but not by GMP. This is Peptide chain release factor 3 from Pseudomonas savastanoi pv. phaseolicola (strain 1448A / Race 6) (Pseudomonas syringae pv. phaseolicola (strain 1448A / Race 6)).